The sequence spans 571 residues: MGRAGGGGPGWGPPPVLLLLGVTLVLTAGAVPAREAGSAIEAEELVRSGLAWESRANDTREEAGLPAAGEDETSWTERGSELAAVGPGVGPEETLEASAAVTGTAWLEADGTGLGGVTAEAGSGDAQTLPATLQAPDEALGSSTMPPAIPEATEASGPPSPTLRDKPSLVPELPKEIPLEVWLNLGGSTPDPQRPEPTFPLQGTLETQPASDIIDIDYFEGLDSEGRGTDMGRFPGSPGTSENHPDTEGETPSWSLLDLYDDFTPFDESDFYPTTSFYDDLEEEEEEEEDKDAVGGGDLEDESDLLLPSQKPGVGPGTGQPTSRWHAVPPQHTLGMVPGGSISLRPRPGDPGKDLATSENGTECRVGFVRHNGSCRSVCDLFPSYCHNGGQCYLVENIGAFCRCNTQDYIWHKGMRCESIITDFQVMCVAVGSAALVLLLLFMMTVFFAKKLYLLKTENTKLRRTNKFRTPSELHNDNFSLSTIAEGSHPNVRKLCDTPCVSSPHARALAHCDNIVCQDDPSAPHKIQEALKSRLKEEESFNIQNSMSPKLEGGKGDQDDLEVNCLQNNLT.

The signal sequence occupies residues 1–30 (MGRAGGGGPGWGPPPVLLLLGVTLVLTAGA). Topologically, residues 31–428 (VPAREAGSAI…SIITDFQVMC (398 aa)) are extracellular. O-linked (Xyl...) (chondroitin sulfate) serine glycosylation is present at serine 38. Residue asparagine 57 is glycosylated (N-linked (GlcNAc...) asparagine). The tract at residues 57–91 (NDTREEAGLPAAGEDETSWTERGSELAAVGPGVGP) is disordered. The O-linked (GalNAc...) threonine glycan is linked to threonine 76. A glycan (O-linked (Xyl...) (chondroitin sulfate) serine) is linked at serine 123. Threonine 132 carries O-linked (GalNAc...) threonine glycosylation. Disordered stretches follow at residues 137–169 (DEALGSSTMPPAIPEATEASGPPSPTLRDKPSL), 186–254 (GGST…TPSW), and 279–357 (DDLE…DLAT). O-linked (GalNAc...) serine glycosylation is present at serine 143. 2 O-linked (GalNAc...) threonine glycosylation sites follow: threonine 144 and threonine 153. O-linked (GalNAc...) serine glycosylation is found at serine 156 and serine 160. 2 O-linked (GalNAc...) threonine glycosylation sites follow: threonine 162 and threonine 198. Over residues 214–223 (IDIDYFEGLD) the composition is skewed to acidic residues. Threonine 240 carries an O-linked (GalNAc...) threonine glycan. The tract at residues 270-306 (DFYPTTSFYDDLEEEEEEEEDKDAVGGGDLEDESDLL) is interaction with TNC and TNR. The span at 279 to 291 (DDLEEEEEEEEDK) shows a compositional bias: acidic residues. Threonine 318 and threonine 322 each carry an O-linked (GalNAc...) threonine glycan. N-linked (GlcNAc...) asparagine glycosylation occurs at asparagine 372. The region spanning 376-418 (RSVCDLFPSYCHNGGQCYLVENIGAFCRCNTQDYIWHKGMRCE) is the EGF-like domain. 3 disulfide bridges follow: cysteine 379-cysteine 392, cysteine 386-cysteine 402, and cysteine 404-cysteine 417. The chain crosses the membrane as a helical span at residues 429 to 449 (VAVGSAALVLLLLFMMTVFFA). The interval 447–465 (FFAKKLYLLKTENTKLRRT) is interaction with GOPC. At 450 to 571 (KKLYLLKTEN…EVNCLQNNLT (122 aa)) the chain is on the cytoplasmic side. Phosphoserine is present on residues serine 472, serine 480, serine 488, and serine 548. The tract at residues 538–563 (EESFNIQNSMSPKLEGGKGDQDDLEV) is disordered.

In terms of assembly, interacts with ERBB3 and GOPC. Binds TNR and probably TNC. Interacts with MDK; this interaction is independent of the presence of chondroitin sulfate chains and promotes elongation of oligodendroglial precursor-like cells. In terms of processing, N-glycosylated. Post-translationally, O-glycosylated; contains chondroitin sulfate glycans. Part-time proteoglycan, expressed in part as a proteoglycan exhibiting chondroitin sulfate glycans and in part as a non-proteoglycan form. The relative amount of both forms depends on tissues and tissue maturation. Phosphorylated; in intracellular and extracellular parts. Expressed in cerebral cortex and cerebellum. Expressed in retina (at protein level).

The protein localises to the cell membrane. The protein resides in the synaptic cell membrane. It is found in the endoplasmic reticulum membrane. Its subcellular location is the golgi apparatus membrane. It localises to the cell surface. The protein localises to the secreted. Its function is as follows. May function as a growth and differentiation factor involved in neuritogenesis. May induce ERBB3 activation. The chain is Chondroitin sulfate proteoglycan 5 (Cspg5) from Rattus norvegicus (Rat).